The primary structure comprises 157 residues: Globin (157 aa).

Glycine 1 carries the post-translational modification N-acetylglycine. The region spanning serine 8–lysine 155 is the Globin domain. Heme b contacts are provided by histidine 70 and histidine 102.

This sequence belongs to the globin family. As to quaternary structure, monomer.

The chain is Globin from Nerita albicilla (Ox-palate nerite).